The chain runs to 445 residues: Phosphoglucosamine mutase (445 aa).

The active-site Phosphoserine intermediate is the Ser-101. Mg(2+) contacts are provided by Ser-101, Asp-240, Asp-242, and Asp-244. Ser-101 is subject to Phosphoserine.

It belongs to the phosphohexose mutase family. The cofactor is Mg(2+). In terms of processing, activated by phosphorylation.

The enzyme catalyses alpha-D-glucosamine 1-phosphate = D-glucosamine 6-phosphate. Its function is as follows. Catalyzes the conversion of glucosamine-6-phosphate to glucosamine-1-phosphate. The protein is Phosphoglucosamine mutase of Pseudomonas paraeruginosa (strain DSM 24068 / PA7) (Pseudomonas aeruginosa (strain PA7)).